We begin with the raw amino-acid sequence, 270 residues long: Chymotrypsin-like elastase family member 3B (270 aa).

The or 16 signal peptide spans 1–15; the sequence is MMLRLLSSLLLVAVA. Residues 16–28 constitute a propeptide, activation peptide; it reads SGYGPPSSRPSSR. Residues 29–268 form the Peptidase S1 domain; that stretch reads VVNGEDAVPY…FIDWIEETIA (240 aa). Cys-58 and Cys-74 are joined by a disulfide. The Charge relay system role is filled by His-73. Asn-114 carries N-linked (GlcNAc...) asparagine glycosylation. A disulfide bond links Cys-117 and Cys-120. Asp-123 acts as the Charge relay system in catalysis. Intrachain disulfides connect Cys-157–Cys-223, Cys-188–Cys-204, and Cys-213–Cys-244. The active-site Charge relay system is Ser-217.

This sequence belongs to the peptidase S1 family. Elastase subfamily. As to expression, pancreas. Not detectable in keratinocytes.

The catalysed reaction is Preferential cleavage: Ala-|-Xaa. Does not hydrolyze elastin.. Functionally, efficient protease with alanine specificity but only little elastolytic activity. The polypeptide is Chymotrypsin-like elastase family member 3B (CELA3B) (Homo sapiens (Human)).